The sequence spans 442 residues: Zuotin (442 aa).

The tract at residues Arg-49 to Ala-84 is disordered. Thr-55 is modified (phosphothreonine). The segment covering Thr-55 to Glu-71 has biased composition (basic and acidic residues). Phosphoserine occurs at positions 57 and 76. The span at Val-72–Pro-83 shows a compositional bias: acidic residues. One can recognise a J domain in the interval Asp-97 to Asp-167. Disordered stretches follow at residues Asp-242–Arg-270 and Gly-306–Ala-331. A compositionally biased stretch (basic and acidic residues) spans Lys-316–Ala-330.

In terms of assembly, RAC is a heterodimer of the Hsp70/DnaK-type chaperone ssz1 and the Hsp40/DnaJ-type chaperone zuo1. RAC associates with ribosomes via zuo1.

Its subcellular location is the cytoplasm. Functionally, component of the ribosome-associated complex (RAC), a heterodimeric chaperone complex involved in regulation of accurate translation termination and in folding or maintaining nascent polypeptides in a folding-competent state. RAC stimulates the ATPase activity of the ribosome-associated pool of Hsp70-type chaperones SSB1/SSB2 that bind to the nascent polypeptide chain. The sequence is that of Zuotin (zuo1) from Schizosaccharomyces pombe (strain 972 / ATCC 24843) (Fission yeast).